Here is a 149-residue protein sequence, read N- to C-terminus: Nucleoside diphosphate kinase (149 aa).

Positions 9, 57, 85, 91, 102, and 112 each coordinate ATP. The active-site Pros-phosphohistidine intermediate is the histidine 115.

It belongs to the NDK family. Mg(2+) serves as cofactor.

Its subcellular location is the cytoplasm. It catalyses the reaction a 2'-deoxyribonucleoside 5'-diphosphate + ATP = a 2'-deoxyribonucleoside 5'-triphosphate + ADP. The catalysed reaction is a ribonucleoside 5'-diphosphate + ATP = a ribonucleoside 5'-triphosphate + ADP. In terms of biological role, major role in the synthesis of nucleoside triphosphates other than ATP. The ATP gamma phosphate is transferred to the NDP beta phosphate via a ping-pong mechanism, using a phosphorylated active-site intermediate. The sequence is that of Nucleoside diphosphate kinase from Methanosarcina barkeri (strain Fusaro / DSM 804).